Here is a 168-residue protein sequence, read N- to C-terminus: Peptide deformylase 2 (168 aa).

Fe cation-binding residues include C91 and H133. E134 is an active-site residue. H137 contributes to the Fe cation binding site.

It belongs to the polypeptide deformylase family. Fe(2+) serves as cofactor.

It carries out the reaction N-terminal N-formyl-L-methionyl-[peptide] + H2O = N-terminal L-methionyl-[peptide] + formate. Its function is as follows. Removes the formyl group from the N-terminal Met of newly synthesized proteins. Requires at least a dipeptide for an efficient rate of reaction. N-terminal L-methionine is a prerequisite for activity but the enzyme has broad specificity at other positions. This Vibrio cholerae serotype O1 (strain ATCC 39315 / El Tor Inaba N16961) protein is Peptide deformylase 2.